Consider the following 326-residue polypeptide: Serine hydrolase-like protein (326 aa).

Residues 44-155 (PVLCLHGWAD…FLPTEVTDMF (112 aa)) form the AB hydrolase-1 domain. The active site involves serine 118.

Belongs to the AB hydrolase superfamily.

Probable serine hydrolase. This Danio rerio (Zebrafish) protein is Serine hydrolase-like protein (serhl).